The primary structure comprises 159 residues: SsrA-binding protein (159 aa).

Belongs to the SmpB family.

Its subcellular location is the cytoplasm. Its function is as follows. Required for rescue of stalled ribosomes mediated by trans-translation. Binds to transfer-messenger RNA (tmRNA), required for stable association of tmRNA with ribosomes. tmRNA and SmpB together mimic tRNA shape, replacing the anticodon stem-loop with SmpB. tmRNA is encoded by the ssrA gene; the 2 termini fold to resemble tRNA(Ala) and it encodes a 'tag peptide', a short internal open reading frame. During trans-translation Ala-aminoacylated tmRNA acts like a tRNA, entering the A-site of stalled ribosomes, displacing the stalled mRNA. The ribosome then switches to translate the ORF on the tmRNA; the nascent peptide is terminated with the 'tag peptide' encoded by the tmRNA and targeted for degradation. The ribosome is freed to recommence translation, which seems to be the essential function of trans-translation. This Mycobacteroides abscessus (strain ATCC 19977 / DSM 44196 / CCUG 20993 / CIP 104536 / JCM 13569 / NCTC 13031 / TMC 1543 / L948) (Mycobacterium abscessus) protein is SsrA-binding protein.